The following is a 132-amino-acid chain: MARVTVEDCVERVPNRFELVLLAAQRARGLSRGEELTVDRDNDKNPVVALREIADQTIVLEQIRSDLVRSLARAPEPEPADEEVMDLIPTEQNIFGLQDVSAEEEASHGTAGMSAEELEAAIEAELGGRARR.

Residues 100 to 119 (VSAEEEASHGTAGMSAEELE) are disordered.

It belongs to the RNA polymerase subunit omega family. In terms of assembly, the RNAP catalytic core consists of 2 alpha, 1 beta, 1 beta' and 1 omega subunit. When a sigma factor is associated with the core the holoenzyme is formed, which can initiate transcription.

It carries out the reaction RNA(n) + a ribonucleoside 5'-triphosphate = RNA(n+1) + diphosphate. Promotes RNA polymerase assembly. Latches the N- and C-terminal regions of the beta' subunit thereby facilitating its interaction with the beta and alpha subunits. This is DNA-directed RNA polymerase subunit omega from Gluconacetobacter diazotrophicus (strain ATCC 49037 / DSM 5601 / CCUG 37298 / CIP 103539 / LMG 7603 / PAl5).